We begin with the raw amino-acid sequence, 173 residues long: Putative 4-hydroxy-4-methyl-2-oxoglutarate aldolase (173 aa).

Residues 89–92 (GGNL) and arginine 111 each bind substrate. Aspartate 112 provides a ligand contact to a divalent metal cation.

The protein belongs to the class II aldolase/RraA-like family. As to quaternary structure, homotrimer. A divalent metal cation serves as cofactor.

It carries out the reaction 4-hydroxy-4-methyl-2-oxoglutarate = 2 pyruvate. The catalysed reaction is oxaloacetate + H(+) = pyruvate + CO2. In terms of biological role, catalyzes the aldol cleavage of 4-hydroxy-4-methyl-2-oxoglutarate (HMG) into 2 molecules of pyruvate. Also contains a secondary oxaloacetate (OAA) decarboxylase activity due to the common pyruvate enolate transition state formed following C-C bond cleavage in the retro-aldol and decarboxylation reactions. This is Putative 4-hydroxy-4-methyl-2-oxoglutarate aldolase from Albidiferax ferrireducens (strain ATCC BAA-621 / DSM 15236 / T118) (Rhodoferax ferrireducens).